The sequence spans 275 residues: Ribosomal RNA small subunit methyltransferase A (275 aa).

S-adenosyl-L-methionine is bound by residues Asn-21, Leu-23, Gly-48, Glu-69, Asp-94, and Asn-115.

This sequence belongs to the class I-like SAM-binding methyltransferase superfamily. rRNA adenine N(6)-methyltransferase family. RsmA subfamily.

Its subcellular location is the cytoplasm. It catalyses the reaction adenosine(1518)/adenosine(1519) in 16S rRNA + 4 S-adenosyl-L-methionine = N(6)-dimethyladenosine(1518)/N(6)-dimethyladenosine(1519) in 16S rRNA + 4 S-adenosyl-L-homocysteine + 4 H(+). In terms of biological role, specifically dimethylates two adjacent adenosines (A1518 and A1519) in the loop of a conserved hairpin near the 3'-end of 16S rRNA in the 30S particle. May play a critical role in biogenesis of 30S subunits. The chain is Ribosomal RNA small subunit methyltransferase A from Clostridium botulinum (strain Okra / Type B1).